A 61-amino-acid polypeptide reads, in one-letter code: Small ribosomal subunit protein uS14 (61 aa).

Zn(2+)-binding residues include Cys24, Cys27, Cys40, and Cys43.

This sequence belongs to the universal ribosomal protein uS14 family. Zinc-binding uS14 subfamily. As to quaternary structure, part of the 30S ribosomal subunit. Contacts proteins S3 and S10. Zn(2+) serves as cofactor.

Functionally, binds 16S rRNA, required for the assembly of 30S particles and may also be responsible for determining the conformation of the 16S rRNA at the A site. The chain is Small ribosomal subunit protein uS14 from Clostridium novyi (strain NT).